The sequence spans 93 residues: PqqA binding protein (93 aa).

Belongs to the PqqD family. Monomer. Interacts with PqqE.

It functions in the pathway cofactor biosynthesis; pyrroloquinoline quinone biosynthesis. In terms of biological role, functions as a PqqA binding protein and presents PqqA to PqqE, in the pyrroloquinoline quinone (PQQ) biosynthetic pathway. This Methylococcus capsulatus (strain ATCC 33009 / NCIMB 11132 / Bath) protein is PqqA binding protein.